The sequence spans 701 residues: Ribosomal RNA large subunit methyltransferase K/L (701 aa).

The THUMP domain occupies 44–155 (QAYKICLWSR…SDKLTVYLDL (112 aa)).

It belongs to the methyltransferase superfamily. RlmKL family.

It is found in the cytoplasm. It carries out the reaction guanosine(2445) in 23S rRNA + S-adenosyl-L-methionine = N(2)-methylguanosine(2445) in 23S rRNA + S-adenosyl-L-homocysteine + H(+). It catalyses the reaction guanosine(2069) in 23S rRNA + S-adenosyl-L-methionine = N(2)-methylguanosine(2069) in 23S rRNA + S-adenosyl-L-homocysteine + H(+). In terms of biological role, specifically methylates the guanine in position 2445 (m2G2445) and the guanine in position 2069 (m7G2069) of 23S rRNA. This is Ribosomal RNA large subunit methyltransferase K/L from Pseudoalteromonas atlantica (strain T6c / ATCC BAA-1087).